Consider the following 98-residue polypeptide: Lipolysis-activating peptide 1-alpha chain (98 aa).

Residues 1–22 form the signal peptide; the sequence is MMKLVLFGIIVILFSMIGSIHG. The 64-residue stretch at 26-89 folds into the LCN-type CS-alpha/beta domain; the sequence is PGNYPLNTYG…IWDAVKRHCK (64 aa). 3 disulfides stabilise this stretch: cysteine 40/cysteine 63, cysteine 49/cysteine 68, and cysteine 53/cysteine 70. At lysine 96 the chain carries Lysine amide.

It belongs to the long (3 C-C) scorpion toxin superfamily. As to quaternary structure, monomer (edited version) and heterodimer (non-edited version) of this alpha chain and a beta chain (AC B8XGZ8). In terms of tissue distribution, expressed by the venom gland.

The protein localises to the secreted. In terms of biological role, the heterodimer non-edited LVP1 induces lipolysis in rat adipocytes. Induction of lipolysis by LVP1 appears to be mediated through the beta-2 adrenergic receptor pathway (ADRB2). Its function is as follows. The edited BmKBTx-like, similar to beta-toxins, may modulate voltage-gated sodium channels (Nav) and may block voltage-gated potassium channels (Kv). This Buthus israelis (Israeli scorpion) protein is Lipolysis-activating peptide 1-alpha chain.